A 153-amino-acid polypeptide reads, in one-letter code: Proline-rich membrane anchor 1 (153 aa).

A signal peptide spans M1 to A35. The Extracellular segment spans residues E36–G92. The region spanning P56–P70 is the PRAD domain. The span at P59 to R71 shows a compositional bias: pro residues. The interval P59–N79 is disordered. An N-linked (GlcNAc...) asparagine glycan is attached at N79. Residues L93–I113 form a helical membrane-spanning segment. Topologically, residues C114–V153 are cytoplasmic. Positions A133–V153 are disordered.

In terms of assembly, interacts with ACHE, probably through disulfide bonds. In terms of tissue distribution, isoforms 1 and 2 are expressed in the adult brain. In matured cortical neurons, only isoform 1 is detectable.

Its subcellular location is the cell membrane. It localises to the cell junction. It is found in the synapse. In terms of biological role, required to anchor acetylcholinesterase (ACHE) to the basal lamina of the neuromuscular junction and to the membrane of neuronal synapses in brain. Organizes ACHE into tetramers. The sequence is that of Proline-rich membrane anchor 1 (Prima1) from Rattus norvegicus (Rat).